We begin with the raw amino-acid sequence, 174 residues long: Peptide methionine sulfoxide reductase MsrA (174 aa).

Residue Cys11 is part of the active site.

This sequence belongs to the MsrA Met sulfoxide reductase family.

It carries out the reaction L-methionyl-[protein] + [thioredoxin]-disulfide + H2O = L-methionyl-(S)-S-oxide-[protein] + [thioredoxin]-dithiol. The enzyme catalyses [thioredoxin]-disulfide + L-methionine + H2O = L-methionine (S)-S-oxide + [thioredoxin]-dithiol. Its function is as follows. Has an important function as a repair enzyme for proteins that have been inactivated by oxidation. Catalyzes the reversible oxidation-reduction of methionine sulfoxide in proteins to methionine. In Nitratiruptor sp. (strain SB155-2), this protein is Peptide methionine sulfoxide reductase MsrA.